We begin with the raw amino-acid sequence, 284 residues long: uncharacterized protein (284 aa).

The first 24 residues, 1 to 24, serve as a signal peptide directing secretion; that stretch reads MLYSRESRTTVLFLALVTSLTVLC. Over 25–84 the chain is Cytoplasmic; it reads HSVDVTTVFTTSTITEITTVTAAPQPQNKAETALNTATNIIQTMQFLFNCAPFKWKGPLK. A helical transmembrane segment spans residues 85–104; it reads ITSCALNFIVLLLTAWGYLL. Topologically, residues 105 to 284 are extracellular; it reads KYLQENKLNS…SVHMYSSSLL (180 aa). A glycan (N-linked (GlcNAc...) asparagine) is linked at N270.

It to yeast YNL033w.

It localises to the cell membrane. This is an uncharacterized protein from Saccharomyces cerevisiae (strain ATCC 204508 / S288c) (Baker's yeast).